The primary structure comprises 482 residues: UDP-N-acetylmuramoyl-L-alanyl-D-glutamate--2,6-diaminopimelate ligase 1 (482 aa).

Ser30 serves as a coordination point for UDP-N-acetyl-alpha-D-muramoyl-L-alanyl-D-glutamate. Gly110–Thr116 provides a ligand contact to ATP. UDP-N-acetyl-alpha-D-muramoyl-L-alanyl-D-glutamate-binding positions include Thr152–Thr153, Ser179, and Arg187. Lys219 is subject to N6-carboxylysine. Meso-2,6-diaminopimelate contacts are provided by residues Arg378, Asp402–Arg405, Gly452, and Glu456. Positions Asp402–Arg405 match the Meso-diaminopimelate recognition motif motif.

The protein belongs to the MurCDEF family. MurE subfamily. Mg(2+) is required as a cofactor. Carboxylation is probably crucial for Mg(2+) binding and, consequently, for the gamma-phosphate positioning of ATP.

Its subcellular location is the cytoplasm. It catalyses the reaction UDP-N-acetyl-alpha-D-muramoyl-L-alanyl-D-glutamate + meso-2,6-diaminopimelate + ATP = UDP-N-acetyl-alpha-D-muramoyl-L-alanyl-gamma-D-glutamyl-meso-2,6-diaminopimelate + ADP + phosphate + H(+). It participates in cell wall biogenesis; peptidoglycan biosynthesis. Its function is as follows. Catalyzes the addition of meso-diaminopimelic acid to the nucleotide precursor UDP-N-acetylmuramoyl-L-alanyl-D-glutamate (UMAG) in the biosynthesis of bacterial cell-wall peptidoglycan. The protein is UDP-N-acetylmuramoyl-L-alanyl-D-glutamate--2,6-diaminopimelate ligase 1 of Clostridium acetobutylicum (strain ATCC 824 / DSM 792 / JCM 1419 / IAM 19013 / LMG 5710 / NBRC 13948 / NRRL B-527 / VKM B-1787 / 2291 / W).